Here is a 600-residue protein sequence, read N- to C-terminus: MNHQKYIRNFSIIAHIDHGKSTLADRLIEHCGGLQAREMSQQVLDSMDIEKERGITIKAQTVRLVYKAKDGNTYYLNLMDTPGHVDFAYEVSRSLAACEGSLLVVDSTQGVAAQTLANVYQAIENDHEIVLVLNKLDLPASEPEQVKQQIEDIIGIDTSDAVLISAKSGIGIDLVLEAIVNKLPPPKESSSDILKALLVDSWYDQYLGVVILVRVIDGYLRKNMRIKMMATNSVYTVENVGYFTPKKHISDVLHAGEIGFFTAAIKQVADCKVGDTITDEKKPCEQALPGFKPNLPVVFCGLYPTDSSEFEHLKDSLAKLRLNDASFEYEMESSSALGVGFRCGFLGLLHLEIIQERLSREFDLDLITTAPSVVYKIHMQDGENLEIHNPADLPNLQKIESMEEPWIKATIMVPDEFLGAVLSLCTEKRGMQLDHSYIANRAKIIYKLPLNEIVYDFYDRLKSCSKGYASFEWQMDVYEPSELVKLGILVNAEVVDALSTIVHRSRAEQRGRALCVRLKDLIPRQQIDIAIQASIGSRIIARETIKALRKDVLSKCYGGDISRKRKLLEKQKAGKKRMRQYGNIEIPQSAFIAALKIGDE.

Positions 5–187 (KYIRNFSIIA…AIVNKLPPPK (183 aa)) constitute a tr-type G domain. GTP contacts are provided by residues 17–22 (DHGKST) and 134–137 (NKLD).

It belongs to the TRAFAC class translation factor GTPase superfamily. Classic translation factor GTPase family. LepA subfamily.

The protein localises to the cell inner membrane. The catalysed reaction is GTP + H2O = GDP + phosphate + H(+). Functionally, required for accurate and efficient protein synthesis under certain stress conditions. May act as a fidelity factor of the translation reaction, by catalyzing a one-codon backward translocation of tRNAs on improperly translocated ribosomes. Back-translocation proceeds from a post-translocation (POST) complex to a pre-translocation (PRE) complex, thus giving elongation factor G a second chance to translocate the tRNAs correctly. Binds to ribosomes in a GTP-dependent manner. The chain is Elongation factor 4 from Rickettsia africae (strain ESF-5).